We begin with the raw amino-acid sequence, 734 residues long: Phosphoribosylformylglycinamidine synthase subunit PurL (734 aa).

The active site involves H49. Residues Y52 and K91 each coordinate ATP. E93 is a Mg(2+) binding site. Residues S94 to H97 and R116 each bind substrate. H95 serves as the catalytic Proton acceptor. D117 serves as a coordination point for Mg(2+). A substrate-binding site is contributed by Q240. D268 contributes to the Mg(2+) binding site. E312 to Q314 is a substrate binding site. 2 residues coordinate ATP: D491 and G528. N529 provides a ligand contact to Mg(2+). Position 531 (S531) interacts with substrate.

This sequence belongs to the FGAMS family. As to quaternary structure, monomer. Part of the FGAM synthase complex composed of 1 PurL, 1 PurQ and 2 PurS subunits.

The protein localises to the cytoplasm. It catalyses the reaction N(2)-formyl-N(1)-(5-phospho-beta-D-ribosyl)glycinamide + L-glutamine + ATP + H2O = 2-formamido-N(1)-(5-O-phospho-beta-D-ribosyl)acetamidine + L-glutamate + ADP + phosphate + H(+). It participates in purine metabolism; IMP biosynthesis via de novo pathway; 5-amino-1-(5-phospho-D-ribosyl)imidazole from N(2)-formyl-N(1)-(5-phospho-D-ribosyl)glycinamide: step 1/2. In terms of biological role, part of the phosphoribosylformylglycinamidine synthase complex involved in the purines biosynthetic pathway. Catalyzes the ATP-dependent conversion of formylglycinamide ribonucleotide (FGAR) and glutamine to yield formylglycinamidine ribonucleotide (FGAM) and glutamate. The FGAM synthase complex is composed of three subunits. PurQ produces an ammonia molecule by converting glutamine to glutamate. PurL transfers the ammonia molecule to FGAR to form FGAM in an ATP-dependent manner. PurS interacts with PurQ and PurL and is thought to assist in the transfer of the ammonia molecule from PurQ to PurL. This Zymomonas mobilis subsp. mobilis (strain ATCC 31821 / ZM4 / CP4) protein is Phosphoribosylformylglycinamidine synthase subunit PurL.